Reading from the N-terminus, the 130-residue chain is Prefoldin subunit alpha (130 aa).

The protein belongs to the prefoldin subunit alpha family. Heterohexamer of two alpha and four beta subunits.

The protein resides in the cytoplasm. Molecular chaperone capable of stabilizing a range of proteins. Seems to fulfill an ATP-independent, HSP70-like function in archaeal de novo protein folding. In Thermoplasma acidophilum (strain ATCC 25905 / DSM 1728 / JCM 9062 / NBRC 15155 / AMRC-C165), this protein is Prefoldin subunit alpha (pfdA).